Consider the following 355-residue polypeptide: Anthranilate phosphoribosyltransferase (355 aa).

Residues Gly99, 102 to 103 (GD), Thr107, 109 to 112 (NIST), 127 to 135 (KHGNRSVSS), and Ser139 each bind 5-phospho-alpha-D-ribose 1-diphosphate. Residue Gly99 coordinates anthranilate. Residue Ser111 participates in Mg(2+) binding. Asn130 is a binding site for anthranilate. Arg185 contacts anthranilate. Residues Asp243 and Glu244 each coordinate Mg(2+).

It belongs to the anthranilate phosphoribosyltransferase family. Homodimer. Requires Mg(2+) as cofactor.

The catalysed reaction is N-(5-phospho-beta-D-ribosyl)anthranilate + diphosphate = 5-phospho-alpha-D-ribose 1-diphosphate + anthranilate. The protein operates within amino-acid biosynthesis; L-tryptophan biosynthesis; L-tryptophan from chorismate: step 2/5. Functionally, catalyzes the transfer of the phosphoribosyl group of 5-phosphorylribose-1-pyrophosphate (PRPP) to anthranilate to yield N-(5'-phosphoribosyl)-anthranilate (PRA). In Pseudoalteromonas translucida (strain TAC 125), this protein is Anthranilate phosphoribosyltransferase.